A 363-amino-acid chain; its full sequence is 3-dehydroquinate synthase (363 aa).

NAD(+) contacts are provided by residues 134 to 135 (TT), lysine 147, and lysine 156. The Zn(2+) site is built by glutamate 189, histidine 254, and histidine 271.

The protein belongs to the sugar phosphate cyclases superfamily. Dehydroquinate synthase family. Co(2+) serves as cofactor. Zn(2+) is required as a cofactor. It depends on NAD(+) as a cofactor.

Its subcellular location is the cytoplasm. It catalyses the reaction 7-phospho-2-dehydro-3-deoxy-D-arabino-heptonate = 3-dehydroquinate + phosphate. The protein operates within metabolic intermediate biosynthesis; chorismate biosynthesis; chorismate from D-erythrose 4-phosphate and phosphoenolpyruvate: step 2/7. In terms of biological role, catalyzes the conversion of 3-deoxy-D-arabino-heptulosonate 7-phosphate (DAHP) to dehydroquinate (DHQ). In Prochlorococcus marinus (strain MIT 9312), this protein is 3-dehydroquinate synthase.